Consider the following 86-residue polypeptide: Large ribosomal subunit protein bL31B (86 aa).

This sequence belongs to the bacterial ribosomal protein bL31 family. Type B subfamily. Part of the 50S ribosomal subunit.

This is Large ribosomal subunit protein bL31B from Streptococcus equi subsp. equi (strain 4047).